Reading from the N-terminus, the 259-residue chain is Adenosylcobinamide-GDP ribazoletransferase (259 aa).

Helical transmembrane passes span 9-29 (NLFFIAMGFFTRIPMPKWIEV), 43-63 (LVGLLVGAISALVYTLMLYWV), 64-84 (SPSIAIVLAMITSVLVTGGFH), 118-138 (ALALVLALLLKWQLLTELALF), 143-163 (VSLALIVGHCLSRVVAASFIF), and 190-210 (ILLATGILALLLVGVMQALVL).

It belongs to the CobS family. The cofactor is Mg(2+).

The protein resides in the cell inner membrane. The catalysed reaction is alpha-ribazole + adenosylcob(III)inamide-GDP = adenosylcob(III)alamin + GMP + H(+). The enzyme catalyses alpha-ribazole 5'-phosphate + adenosylcob(III)inamide-GDP = adenosylcob(III)alamin 5'-phosphate + GMP + H(+). It participates in cofactor biosynthesis; adenosylcobalamin biosynthesis; adenosylcobalamin from cob(II)yrinate a,c-diamide: step 7/7. In terms of biological role, joins adenosylcobinamide-GDP and alpha-ribazole to generate adenosylcobalamin (Ado-cobalamin). Also synthesizes adenosylcobalamin 5'-phosphate from adenosylcobinamide-GDP and alpha-ribazole 5'-phosphate. This chain is Adenosylcobinamide-GDP ribazoletransferase, found in Shewanella pealeana (strain ATCC 700345 / ANG-SQ1).